The primary structure comprises 283 residues: MITHPQFDPVLISIGPLAVRWYALSYILGFILFTFLGRRRIAQGLSVFTKESLDDFLTWGILGVILGGRLGYVLFYKFSDYLAHPLDIFKVWEGGMSFHGGFLGVVIAIWLFGRKHGIGFLKLMDTVAPLVPLGLASGRIGNFINGELWGRVTDINAFWAMGFPQARYEDLEAAAHNPLWAEWLQQYGMLPRHPSQLYQFALEGICLFAVVWLFSKKQRPTGQVASLFLGGYGIFRFIAEFARQPDDYLGLLTLGLSMGQWLSVPMIVLGIVGFVRFGMKKQH.

Helical transmembrane passes span 17-37 (LAVR…TFLG), 56-76 (FLTW…VLFY), 92-112 (WEGG…IWLF), and 117-137 (GIGF…GLAS). R139 is a binding site for a 1,2-diacyl-sn-glycero-3-phospho-(1'-sn-glycerol). The next 3 membrane-spanning stretches (helical) occupy residues 194-214 (PSQL…VWLF), 222-242 (GQVA…AEFA), and 255-275 (GLSM…VGFV).

The protein belongs to the Lgt family.

The protein resides in the cell inner membrane. It carries out the reaction L-cysteinyl-[prolipoprotein] + a 1,2-diacyl-sn-glycero-3-phospho-(1'-sn-glycerol) = an S-1,2-diacyl-sn-glyceryl-L-cysteinyl-[prolipoprotein] + sn-glycerol 1-phosphate + H(+). It functions in the pathway protein modification; lipoprotein biosynthesis (diacylglyceryl transfer). Its function is as follows. Catalyzes the transfer of the diacylglyceryl group from phosphatidylglycerol to the sulfhydryl group of the N-terminal cysteine of a prolipoprotein, the first step in the formation of mature lipoproteins. In Neisseria meningitidis serogroup A / serotype 4A (strain DSM 15465 / Z2491), this protein is Phosphatidylglycerol--prolipoprotein diacylglyceryl transferase.